Here is a 105-residue protein sequence, read N- to C-terminus: Serine protease inhibitor Kazal-type 6 (105 aa).

An N-terminal signal peptide occupies residues 1 to 23 (MKVAGVFLLLSLALLCFFSGAFS). Residue glutamine 24 is modified to Pyrrolidone carboxylic acid. The region spanning 49–105 (RLFQINCGEFRDPKVFCTRESDPLCGSDGQTYGNKCAFCKALEKSSGKINLKHRGKC) is the Kazal-like domain. Disulfide bonds link cysteine 55/cysteine 87, cysteine 65/cysteine 84, and cysteine 73/cysteine 105.

In terms of tissue distribution, expressed in the upper epidermis and in skin appendages.

The protein localises to the secreted. Its function is as follows. Serine protease inhibitor selective for kallikreins. Efficiently inhibits KLK5 and human KLK2, KLK4, KLK5, KLK6, KLK7, KLK12, KLK13 and KLK14. Doesn't inhibit human KLK1 and KLK8. This chain is Serine protease inhibitor Kazal-type 6 (Spink6), found in Mus musculus (Mouse).